The chain runs to 394 residues: Putative fimbrial assembly protein FimD, serogroup D (394 aa).

This is Putative fimbrial assembly protein FimD, serogroup D (fimD) from Dichelobacter nodosus (Bacteroides nodosus).